Here is a 131-residue protein sequence, read N- to C-terminus: UPF0382 inner membrane protein YgdD (131 aa).

The Periplasmic segment spans residues 1-4; it reads MTSR. The helical transmembrane segment at 5-25 threads the bilayer; it reads FMLIFAAISGFIFVALGAFGA. Topologically, residues 26-64 are cytoplasmic; that stretch reads HVLSKTMGAVEMGWIQTGLEYQAFHTLAILGLAVAMQRR. Residues 65-85 traverse the membrane as a helical segment; it reads ISIWFYWSSVFLALGTVLFSG. Topologically, residues 86–97 are periplasmic; that stretch reads SLYCLALSHLRL. A helical transmembrane segment spans residues 98-118; the sequence is WAFVTPVGGVSFLAGWALMLV. Residues 119–131 are Cytoplasmic-facing; the sequence is GAIRLKRKGVSHE.

This sequence belongs to the UPF0382 family.

The protein localises to the cell inner membrane. This Escherichia coli O157:H7 protein is UPF0382 inner membrane protein YgdD (ygdD).